Reading from the N-terminus, the 214-residue chain is ATP phosphoribosyltransferase (214 aa).

This sequence belongs to the ATP phosphoribosyltransferase family. Short subfamily. In terms of assembly, heteromultimer composed of HisG and HisZ subunits.

Its subcellular location is the cytoplasm. It carries out the reaction 1-(5-phospho-beta-D-ribosyl)-ATP + diphosphate = 5-phospho-alpha-D-ribose 1-diphosphate + ATP. The protein operates within amino-acid biosynthesis; L-histidine biosynthesis; L-histidine from 5-phospho-alpha-D-ribose 1-diphosphate: step 1/9. Functionally, catalyzes the condensation of ATP and 5-phosphoribose 1-diphosphate to form N'-(5'-phosphoribosyl)-ATP (PR-ATP). Has a crucial role in the pathway because the rate of histidine biosynthesis seems to be controlled primarily by regulation of HisG enzymatic activity. This Methylobacillus flagellatus (strain ATCC 51484 / DSM 6875 / VKM B-1610 / KT) protein is ATP phosphoribosyltransferase.